A 271-amino-acid chain; its full sequence is Calretinin (271 aa).

EF-hand domains follow at residues Leu16–Ala51, Asn63–Phe98, Gly107–Lys142, Lys151–Phe186, Leu195–Lys230, and Met235–Pro270. Ca(2+)-binding residues include Asp29, Asp31, Asn33, Tyr35, Glu40, Asp76, Asn78, Asp80, Lys82, Glu87, Asp120, Asp122, Ser124, Tyr126, Glu131, Asp164, Asn166, Asp168, Lys170, Glu175, Asp208, Asp210, Ser212, Tyr214, and Glu219. Residue Tyr214 is modified to Phosphotyrosine.

It belongs to the calbindin family.

The protein localises to the synapse. Its subcellular location is the cell projection. It localises to the dendrite. Calcium-binding protein involved in calcium homeostasis and signal transduction. It plays a critical role in buffering intracellular calcium levels and modulating calcium-dependent signaling pathways. Predominantly expressed in specific neuronal populations, influences synaptic plasticity and neuronal excitability, contributing to learning and memory. During embryonic development, it facilitates neuronal differentiation and maturation. This chain is Calretinin (Calb2), found in Rattus norvegicus (Rat).